The chain runs to 49 residues: Thymopoietin-1 (49 aa).

Positions 4–47 (LEDPSVLTKEKLKSELVANNVTLPAGEQRKDVYVELYLQHLTAL) constitute an LEM-like domain. The biological activity stretch occupies residues 32 to 36 (RKDVY).

It belongs to the thymopoietin family.

Functionally, hormone of the thymus with pleiotropic actions on prothymocytes, mature T-cells, the nicotinic acetylcholine receptor, and pituitary corticotrophs. This is Thymopoietin-1 from Bos taurus (Bovine).